We begin with the raw amino-acid sequence, 431 residues long: UDP-N-acetylglucosamine--N-acetylmuramyl-(pentapeptide) pyrophosphoryl-undecaprenol N-acetylglucosamine transferase (431 aa).

UDP-N-acetyl-alpha-D-glucosamine contacts are provided by residues 29–31, asparagine 141, arginine 177, serine 205, isoleucine 258, and glutamine 303; that span reads TGG. Residues 370 to 431 form a disordered region; that stretch reads AGSGDGQPPA…NPGASAGGAP (62 aa). Over residues 395–420 the composition is skewed to polar residues; the sequence is KQGSMQTSVNGDRSAQLIATNPQSRL.

Belongs to the glycosyltransferase 28 family. MurG subfamily.

The protein localises to the cell inner membrane. It catalyses the reaction di-trans,octa-cis-undecaprenyl diphospho-N-acetyl-alpha-D-muramoyl-L-alanyl-D-glutamyl-meso-2,6-diaminopimeloyl-D-alanyl-D-alanine + UDP-N-acetyl-alpha-D-glucosamine = di-trans,octa-cis-undecaprenyl diphospho-[N-acetyl-alpha-D-glucosaminyl-(1-&gt;4)]-N-acetyl-alpha-D-muramoyl-L-alanyl-D-glutamyl-meso-2,6-diaminopimeloyl-D-alanyl-D-alanine + UDP + H(+). It participates in cell wall biogenesis; peptidoglycan biosynthesis. Its function is as follows. Cell wall formation. Catalyzes the transfer of a GlcNAc subunit on undecaprenyl-pyrophosphoryl-MurNAc-pentapeptide (lipid intermediate I) to form undecaprenyl-pyrophosphoryl-MurNAc-(pentapeptide)GlcNAc (lipid intermediate II). The chain is UDP-N-acetylglucosamine--N-acetylmuramyl-(pentapeptide) pyrophosphoryl-undecaprenol N-acetylglucosamine transferase from Xanthomonas euvesicatoria pv. vesicatoria (strain 85-10) (Xanthomonas campestris pv. vesicatoria).